A 327-amino-acid chain; its full sequence is Undecaprenyl-phosphate 4-deoxy-4-formamido-L-arabinose transferase (327 aa).

The next 2 helical transmembrane spans lie at 236–256 (LSIF…LLVV) and 270–290 (VFML…GMGL).

The protein belongs to the glycosyltransferase 2 family.

It localises to the cell inner membrane. It catalyses the reaction UDP-4-deoxy-4-formamido-beta-L-arabinose + di-trans,octa-cis-undecaprenyl phosphate = 4-deoxy-4-formamido-alpha-L-arabinopyranosyl di-trans,octa-cis-undecaprenyl phosphate + UDP. The protein operates within glycolipid biosynthesis; 4-amino-4-deoxy-alpha-L-arabinose undecaprenyl phosphate biosynthesis; 4-amino-4-deoxy-alpha-L-arabinose undecaprenyl phosphate from UDP-4-deoxy-4-formamido-beta-L-arabinose and undecaprenyl phosphate: step 1/2. It functions in the pathway bacterial outer membrane biogenesis; lipopolysaccharide biosynthesis. Functionally, catalyzes the transfer of 4-deoxy-4-formamido-L-arabinose from UDP to undecaprenyl phosphate. The modified arabinose is attached to lipid A and is required for resistance to polymyxin and cationic antimicrobial peptides. The protein is Undecaprenyl-phosphate 4-deoxy-4-formamido-L-arabinose transferase of Klebsiella pneumoniae (strain 342).